A 546-amino-acid chain; its full sequence is MWKASAGHAVSITQDDGGADDWETDPDFVNDVSEKEQRWGAKTVQGSGHQEHINIHKLRENVFQEHQTLKEKELETGPKASHGYGGKFGVEQDRMDRSAVGHEYQSKLSKHCSQVDSVRGFGGKFGVQMDRVDQSAVGFEYQGKTEKHASQKDYSSGFGGKYGVQADRVDKSAVGFDYQGKTEKHESQKDYSKGFGGKYGIDKDKVDKSAVGFEYQGKTEKHESQKDYVKGFGGKFGVQTDRQDKCALGWDHQEKLQLHESQKDYKTGFGGKFGVQSERQDSSAVGFDYKERLAKHESQQDYAKGFGGKYGVQKDRMDKNASTFEEVVQVPSAYQKTVPIEAVTSKTSNIRANFENLAKEREQEDRRKAEAERAQRMAKERQEQEEARRKLEEQARAKKQTPPASPSPQPIEDRPPSSPIYEDAAPFKAEPSYRGSEPEPEYSIEAAGIPEAGSQQGLTYTSEPVYETTEAPGHYQAEDDTYDGYESDLGITAIALYDYQAAGDDEISFDPDDIITNIEMIDDGWWRGVCKGRYGLFPANYVELRQ.

Residues 1–28 (MWKASAGHAVSITQDDGGADDWETDPDF) are disordered. A compositionally biased stretch (acidic residues) spans 17–28 (GGADDWETDPDF). Cortactin repeat units follow at residues 80-116 (ASHG…SQVD), 117-153 (SVRG…SQKD), 154-190 (YSSG…SQKD), 191-227 (YSKG…SQKD), 228-264 (YVKG…SQKD), and 265-301 (YKTG…SQQD). An N6-acetyllysine mark is found at Lys-87 and Lys-107. Ser-113 is subject to Phosphoserine. Position 119 is an omega-N-methylarginine (Arg-119). Lys-124 bears the N6-acetyllysine mark. Lys-144 is subject to N6-acetyllysine; alternate. Residue Lys-144 forms a Glycyl lysine isopeptide (Lys-Gly) (interchain with G-Cter in SUMO1); alternate linkage. Residue Lys-144 forms a Glycyl lysine isopeptide (Lys-Gly) (interchain with G-Cter in SUMO2); alternate linkage. Position 150 is a phosphoserine (Ser-150). 3 positions are modified to N6-acetyllysine: Lys-152, Lys-161, and Lys-171. Position 181 is an N6-acetyllysine; alternate (Lys-181). A Glycyl lysine isopeptide (Lys-Gly) (interchain with G-Cter in SUMO1); alternate cross-link involves residue Lys-181. A Glycyl lysine isopeptide (Lys-Gly) (interchain with G-Cter in SUMO2); alternate cross-link involves residue Lys-181. N6-acetyllysine occurs at positions 193 and 198. Residue Lys-218 forms a Glycyl lysine isopeptide (Lys-Gly) (interchain with G-Cter in SUMO1) linkage. Residue Lys-235 is modified to N6-acetyllysine. Ser-261 is modified (phosphoserine). Residue Lys-272 is modified to N6-acetyllysine. Residue Lys-295 is modified to N6-acetyllysine; alternate. Lys-295 participates in a covalent cross-link: Glycyl lysine isopeptide (Lys-Gly) (interchain with G-Cter in SUMO2); alternate. Residues 302–324 (YAKGFGGKYGVQKDRMDKNASTF) form a Cortactin 7; truncated repeat. N6-acetyllysine is present on residues Lys-304, Lys-309, Lys-314, and Lys-346. Residues 348-401 (SNIRANFENLAKEREQEDRRKAEAERAQRMAKERQEQEEARRKLEEQARAKKQT) adopt a coiled-coil conformation. A disordered region spans residues 355-424 (ENLAKEREQE…PPSSPIYEDA (70 aa)). The span at 357–396 (LAKEREQEDRRKAEAERAQRMAKERQEQEEARRKLEEQAR) shows a compositional bias: basic and acidic residues. At Thr-401 the chain carries Phosphothreonine. Residues Ser-405, Ser-407, Ser-417, and Ser-418 each carry the phosphoserine modification. Phosphotyrosine occurs at positions 421 and 442. Ser-443 carries the post-translational modification Phosphoserine. Tyr-466 is subject to Phosphotyrosine; by FAK1. Residues Tyr-482 and Tyr-485 each carry the phosphotyrosine; by SRC modification. The region spanning 488-546 (DLGITAIALYDYQAAGDDEISFDPDDIITNIEMIDDGWWRGVCKGRYGLFPANYVELRQ) is the SH3 domain.

Part of a complex composed of NEDD9, AURKA and CTTN; within the complex NEDD9 acts as a scaffold protein and is required for complex formation. Interacts (via N-terminus) with NEDD9. Identified in a complex containing FGFR4, NCAM1, CDH2, PLCG1, FRS2, SRC, SHC1, GAP43 and CTTN. Forms a complex with ABL1 and MYLK. Interacts with SHANK2 and SHANK3 (via its SH3 domain). Interacts with PLXDC2 and SRCIN1. Interacts with SAMSN1 (via SH3 domain). Interacts (via SH3 domain) with ASAP1 (via Pro-rich region). Interacts (via SH3 domain) with DNM2. Interacts with ACTN1. Interacts with FER. Interacts with KCNA2 (via non-phosphorylated C-terminus). Interacts with FGD1. Interacts with ABL2. Interacts with CTTNBP2NL; this interaction may target CTTN to stress fibers. Interacts with CTTNBP2; this interaction may target CTTN at the cell cortex or dendritic spines. Interacts with KCNH1. Interacts (via SH3 domain) with DIP2A (via N-terminus); the interaction enhances CTTN acetylation and is required for proper synaptic transmission. Interacts with XIRP1 (via N-terminus); the interaction promotes CTTN localization to intercalated disks in cardiomyocytes. In terms of processing, acetylated. Phosphorylated by FER. Phosphorylated in response to FGR activation. Phosphorylation by SRC promotes MYLK binding. Phosphorylated on tyrosine residues in response to CHRM1 activation. Phosphorylated by PTK2/FAK1 in response to cell adhesion. Tyrosine phosphorylation in transformed cells may contribute to cellular growth regulation and transformation. Phosphorylated by PKN2 at both serine and threonine residues in a GTP-bound Rac1-dependent manner in hyaluronan-induced astrocytes and hence down-regulated CTTN ability to associate with filamentous actin. In terms of tissue distribution, expressed at intercalated disks in the heart (at protein level). Expressed in most tissues, except in B-lymphocytes or plasma cells.

It is found in the cytoplasm. The protein resides in the cytoskeleton. It localises to the cell projection. The protein localises to the lamellipodium. Its subcellular location is the ruffle. It is found in the dendrite. The protein resides in the cell membrane. It localises to the podosome. The protein localises to the cell junction. Its subcellular location is the focal adhesion. It is found in the membrane. The protein resides in the clathrin-coated pit. It localises to the dendritic spine. The protein localises to the cell cortex. Its subcellular location is the endoplasmic reticulum. Functionally, contributes to the organization of the actin cytoskeleton and cell shape. Plays a role in the formation of lamellipodia and in cell migration. Plays a role in the regulation of neuron morphology, axon growth and formation of neuronal growth cones. Through its interaction with CTTNBP2, involved in the regulation of neuronal spine density. Plays a role in focal adhesion assembly and turnover. In complex with ABL1 and MYLK regulates cortical actin-based cytoskeletal rearrangement critical to sphingosine 1-phosphate (S1P)-mediated endothelial cell (EC) barrier enhancement. Plays a role in intracellular protein transport and endocytosis, and in modulating the levels of potassium channels present at the cell membrane. Plays a role in receptor-mediated endocytosis via clathrin-coated pits. Required for stabilization of KCNH1 channels at the cell membrane. This Mus musculus (Mouse) protein is Src substrate cortactin (Cttn).